A 403-amino-acid chain; its full sequence is Imidazolonepropionase (403 aa).

Fe(3+) is bound by residues H68 and H70. Residues H68 and H70 each contribute to the Zn(2+) site. 4-imidazolone-5-propanoate contacts are provided by R77, Y140, and H173. N-formimidoyl-L-glutamate is bound at residue Y140. H238 is a Fe(3+) binding site. H238 is a Zn(2+) binding site. Q241 contributes to the 4-imidazolone-5-propanoate binding site. Residue D313 coordinates Fe(3+). Residue D313 participates in Zn(2+) binding. N315 and G317 together coordinate N-formimidoyl-L-glutamate. Residue T318 participates in 4-imidazolone-5-propanoate binding.

Belongs to the metallo-dependent hydrolases superfamily. HutI family. Requires Zn(2+) as cofactor. It depends on Fe(3+) as a cofactor.

It localises to the cytoplasm. The catalysed reaction is 4-imidazolone-5-propanoate + H2O = N-formimidoyl-L-glutamate. It participates in amino-acid degradation; L-histidine degradation into L-glutamate; N-formimidoyl-L-glutamate from L-histidine: step 3/3. In terms of biological role, catalyzes the hydrolytic cleavage of the carbon-nitrogen bond in imidazolone-5-propanoate to yield N-formimidoyl-L-glutamate. It is the third step in the universal histidine degradation pathway. The polypeptide is Imidazolonepropionase (Psychromonas ingrahamii (strain DSM 17664 / CCUG 51855 / 37)).